The chain runs to 410 residues: Peptidase T (410 aa).

His-78 contributes to the Zn(2+) binding site. Asp-80 is a catalytic residue. Zn(2+) is bound at residue Asp-139. Residue Glu-173 is the Proton acceptor of the active site. Residues Glu-174, Asp-196, and His-378 each contribute to the Zn(2+) site.

This sequence belongs to the peptidase M20B family. Zn(2+) serves as cofactor.

The protein localises to the cytoplasm. The enzyme catalyses Release of the N-terminal residue from a tripeptide.. Cleaves the N-terminal amino acid of tripeptides. The chain is Peptidase T from Shewanella woodyi (strain ATCC 51908 / MS32).